We begin with the raw amino-acid sequence, 460 residues long: Mitochondrial distribution and morphology protein 34 (460 aa).

The region spanning 1-196 (MSFKFDWESL…LPGIIHRLSQ (196 aa)) is the SMP-LTD domain. The span at 304–321 (HNHQAPKRRTIKYKRKSK) shows a compositional bias: basic residues. Disordered stretches follow at residues 304–356 (HNHQ…PSRE) and 368–460 (EPSS…AYSG). Composition is skewed to low complexity over residues 330-355 (STEVTTRETTPLPTSSTPLETSTPSR) and 393-405 (SPPSLDLSIDTSL).

Belongs to the MDM34 family. In terms of assembly, component of the ER-mitochondria encounter structure (ERMES) or MDM complex, composed of MMM1, MDM10, MDM12 and MDM34.

It localises to the mitochondrion outer membrane. Its function is as follows. Component of the ERMES/MDM complex, which serves as a molecular tether to connect the endoplasmic reticulum (ER) and mitochondria. Components of this complex are involved in the control of mitochondrial shape and protein biogenesis, and function in nonvesicular lipid trafficking between the ER and mitochondria. MDM34 is required for the interaction of the ER-resident membrane protein MMM1 and the outer mitochondrial membrane-resident beta-barrel protein MDM10. This chain is Mitochondrial distribution and morphology protein 34, found in Yarrowia lipolytica (strain CLIB 122 / E 150) (Yeast).